The sequence spans 101 residues: MAKKSSVEKNKRRRKMVAQQAPKREALRAIARDRTLPPEERFQAVLKLAEMPRNGSKVRIRNRCELTGRPRAYYRKFRLSRVTLRELASTGQIPGMTKSSW.

The interval 1 to 23 (MAKKSSVEKNKRRRKMVAQQAPK) is disordered.

It belongs to the universal ribosomal protein uS14 family. As to quaternary structure, part of the 30S ribosomal subunit. Contacts proteins S3 and S10.

Functionally, binds 16S rRNA, required for the assembly of 30S particles and may also be responsible for determining the conformation of the 16S rRNA at the A site. The protein is Small ribosomal subunit protein uS14 of Rhodospirillum centenum (strain ATCC 51521 / SW).